The sequence spans 235 residues: Sugar fermentation stimulation protein homolog (235 aa).

Belongs to the SfsA family.

The chain is Sugar fermentation stimulation protein homolog from Serratia proteamaculans (strain 568).